A 637-amino-acid chain; its full sequence is 1-deoxy-D-xylulose-5-phosphate synthase (637 aa).

Thiamine diphosphate contacts are provided by residues H71 and 112-114; that span reads SHA. D144 serves as a coordination point for Mg(2+). Thiamine diphosphate is bound by residues 145-146, N173, Y284, and E365; that span reads GA. Residue N173 coordinates Mg(2+).

This sequence belongs to the transketolase family. DXPS subfamily. Homodimer. Mg(2+) is required as a cofactor. The cofactor is thiamine diphosphate.

The catalysed reaction is D-glyceraldehyde 3-phosphate + pyruvate + H(+) = 1-deoxy-D-xylulose 5-phosphate + CO2. The protein operates within metabolic intermediate biosynthesis; 1-deoxy-D-xylulose 5-phosphate biosynthesis; 1-deoxy-D-xylulose 5-phosphate from D-glyceraldehyde 3-phosphate and pyruvate: step 1/1. Functionally, catalyzes the acyloin condensation reaction between C atoms 2 and 3 of pyruvate and glyceraldehyde 3-phosphate to yield 1-deoxy-D-xylulose-5-phosphate (DXP). The sequence is that of 1-deoxy-D-xylulose-5-phosphate synthase from Mycolicibacterium vanbaalenii (strain DSM 7251 / JCM 13017 / BCRC 16820 / KCTC 9966 / NRRL B-24157 / PYR-1) (Mycobacterium vanbaalenii).